The sequence spans 294 residues: tRNA dimethylallyltransferase (294 aa).

10–17 contributes to the ATP binding site; the sequence is GPTAVGKT. A substrate-binding site is contributed by 12-17; that stretch reads TAVGKT. The segment at 35–38 is interaction with substrate tRNA; it reads DSQQ.

This sequence belongs to the IPP transferase family. Monomer. Requires Mg(2+) as cofactor.

The enzyme catalyses adenosine(37) in tRNA + dimethylallyl diphosphate = N(6)-dimethylallyladenosine(37) in tRNA + diphosphate. Its function is as follows. Catalyzes the transfer of a dimethylallyl group onto the adenine at position 37 in tRNAs that read codons beginning with uridine, leading to the formation of N6-(dimethylallyl)adenosine (i(6)A). In Streptococcus pneumoniae serotype 19F (strain G54), this protein is tRNA dimethylallyltransferase.